A 307-amino-acid polypeptide reads, in one-letter code: D-alanine--D-alanine ligase (307 aa).

One can recognise an ATP-grasp domain in the interval 101 to 301; that stretch reads KTVMRAAGVS…FGELVRWMVE (201 aa). 127 to 182 lines the ATP pocket; sequence PLTPPYVVKPIAEGSSMGVIIVRDERSHPPQILASDEWVYGEEVLAETYVAGRELT. Mg(2+) is bound by residues Asp-251, Glu-268, and Asn-270.

It belongs to the D-alanine--D-alanine ligase family. Mg(2+) is required as a cofactor. It depends on Mn(2+) as a cofactor.

It is found in the cytoplasm. It carries out the reaction 2 D-alanine + ATP = D-alanyl-D-alanine + ADP + phosphate + H(+). It functions in the pathway cell wall biogenesis; peptidoglycan biosynthesis. Its function is as follows. Cell wall formation. The protein is D-alanine--D-alanine ligase of Methylorubrum extorquens (strain CM4 / NCIMB 13688) (Methylobacterium extorquens).